We begin with the raw amino-acid sequence, 334 residues long: Ferredoxin--NADP reductase (334 aa).

FAD is bound by residues aspartate 33, glutamine 41, tyrosine 46, alanine 86, phenylalanine 120, aspartate 286, and threonine 327.

This sequence belongs to the ferredoxin--NADP reductase type 2 family. In terms of assembly, homodimer. Requires FAD as cofactor.

It catalyses the reaction 2 reduced [2Fe-2S]-[ferredoxin] + NADP(+) + H(+) = 2 oxidized [2Fe-2S]-[ferredoxin] + NADPH. The chain is Ferredoxin--NADP reductase from Rickettsia massiliae (strain Mtu5).